The sequence spans 188 residues: Abscisic acid receptor PYL8 (188 aa).

Residues 25–176 (HELVDNQCSS…NLKSLADISE (152 aa)) form an START-like region. A disulfide bridge connects residues Cys32 and Cys157. Lys61 contributes to the abscisate binding site. Thr77 is subject to Phosphothreonine; by CARK1. The Gate loop signature appears at 85–89 (SGLPA). Abscisate contacts are provided by residues 89–94 (ATRSTE), 116–122 (RLKNYSS), and Glu141. The short motif at 115 to 117 (HRL) is the Latch loop element.

The protein belongs to the PYR/PYL/RCAR abscisic acid intracellular receptor family. As to quaternary structure, monomer. Homodimer. Binds ABA on one subunit only. interacts with ABI1 and HAB1, and possibly with other PP2Cs. Binds to CARs protein in an ABA-independent manner, both at the plasma membrane and in the nucleus. Interacts directly with CAR1 and CAR4. Interacts with MYB44, MYB73 and MYB77 in an ABA-independent manner. Interacts with DDA1. Interacts with CARK1 in the cytosol. Binds to ABI1 when phosphorylated by CARK1. Interacts with AIP1 in the nucleus. Post-translationally, phosphorylated by CARK1 especially in response to abscisic acid (ABA); this phosphorylation promotes its stability and inhibitory ability to ABI1. Ubiquitinated in DDA1- and CDD complex-dependent manner. Ubiquitination leads to its subsequent proteasomal degradation.

The protein resides in the cytoplasm. It localises to the cytosol. Its subcellular location is the nucleus. It is found in the cell membrane. In terms of biological role, receptor for abscisic acid (ABA) required for ABA-mediated responses such as stomatal closure and germination inhibition. Inhibits the activity of group-A protein phosphatases type 2C (PP2Cs) in an ABA-independent manner but more efficiently when activated by ABA. Confers enhanced sensitivity to ABA. Can be activated by both (-)-ABA and (+)-ABA. Mediates crosstalk between ABA and auxin signaling to regulate lateral root growth. Required for lateral root growth suppression by ABA. In response to auxin, promotes lateral root growth by enhancing MYB77-dependent transcription of the auxin-responsive gene IAA19. Enhances the abilities of MYB44 and MYB73 to activate IAA19 gene. This Arabidopsis thaliana (Mouse-ear cress) protein is Abscisic acid receptor PYL8.